Here is a 485-residue protein sequence, read N- to C-terminus: Calcium/manganese antiporter SLC30A10 (485 aa).

Over 1–10 (MGRYSGKTCR) the chain is Cytoplasmic. Residues 11–31 (LLFMLVLTVAFFVAELVSGYL) traverse the membrane as a helical segment. Topologically, residues 32-40 (GNSIALLSD) are extracellular. A helical transmembrane segment spans residues 41-61 (SFNMLSDLISLCVGLSAGYIA). The Cytoplasmic segment spans residues 62 to 81 (RRPTRGFSATYGYARAEVVG). Residues 82–102 (ALSNAVFLTALCFTIFVEAVL) form a helical membrane-spanning segment. The Extracellular segment spans residues 103-113 (RLARPERIDDP). Residues 114-134 (ELVLIVGVLGLLVNVVGLLIF) traverse the membrane as a helical segment. Over 135 to 244 (QDCAAWFACC…ALNIRGVLLH (110 aa)) the chain is Cytoplasmic. The segment at 167–196 (FGGPQGAEDPRRAADPTAPGSDSAVTLRGT) is disordered. A helical membrane pass occupies residues 245–265 (VMGDALGSVVVVITAIIFYVL). Residues 266-278 (PLKSEDPCNWQCY) are Extracellular-facing. Residues 279-299 (IDPSLTVLMVIIILSSAFPLI) form a helical membrane-spanning segment. Residues 300-485 (KETAAILLQM…DQCYVNRTHF (186 aa)) lie on the Cytoplasmic side of the membrane. The segment at 308–485 (QMVPKGVNME…DQCYVNRTHF (178 aa)) is required for plasma membrane localization.

It belongs to the cation diffusion facilitator (CDF) transporter (TC 2.A.4) family. SLC30A subfamily. As to quaternary structure, forms homodimers. Forms heterodimers and high-molecular weight oligomers with SLC30A3, SLC30A2 and SLC30A4; heterodimerization is mediated by covalent-bound tyrosine residues, occurs probably in a tissue-specific manner and could mediate the intracellular zinc transport activity into early endosomes and recycling endosomes. In terms of tissue distribution, specifically expressed in fetal liver and fetal brain. Expressed in adult tissues with relative levels small intestine &gt; liver &gt; testes &gt; brain &gt; ovary &gt; colon &gt; cervix &gt; prostate &gt; placenta. Expressed in liver and neurons of the nervous system (at protein level).

It is found in the cell membrane. Its subcellular location is the golgi apparatus membrane. It localises to the recycling endosome membrane. The protein localises to the early endosome membrane. The enzyme catalyses Mn(2+)(out) + Ca(2+)(in) = Mn(2+)(in) + Ca(2+)(out). It catalyses the reaction Zn(2+)(in) = Zn(2+)(out). Its function is as follows. Calcium:manganese antiporter of the plasma membrane mediating the efflux of intracellular manganese coupled to an active extracellular calcium exchange. Required for intracellular manganese homeostasis, an essential cation for the function of several enzymes, including some crucially important for the metabolism of neurotransmitters and other neuronal metabolic pathways. Manganese can also be cytotoxic and induce oxidative stress, mitochondrial dysfunction and apoptosis. Could also have an intracellular zinc ion transporter activity, directly regulating intracellular zinc ion homeostasis and more indirectly various signaling pathway and biological processes. The chain is Calcium/manganese antiporter SLC30A10 from Homo sapiens (Human).